Here is a 534-residue protein sequence, read N- to C-terminus: Glucose-6-phosphate isomerase (534 aa).

Glu356 serves as the catalytic Proton donor. Residues His387 and Lys502 contribute to the active site.

The protein belongs to the GPI family.

It localises to the cytoplasm. The enzyme catalyses alpha-D-glucose 6-phosphate = beta-D-fructose 6-phosphate. Its pathway is carbohydrate biosynthesis; gluconeogenesis. It functions in the pathway carbohydrate degradation; glycolysis; D-glyceraldehyde 3-phosphate and glycerone phosphate from D-glucose: step 2/4. In terms of biological role, catalyzes the reversible isomerization of glucose-6-phosphate to fructose-6-phosphate. The chain is Glucose-6-phosphate isomerase from Desulfotalea psychrophila (strain LSv54 / DSM 12343).